The primary structure comprises 443 residues: Trigger factor (443 aa).

A PPIase FKBP-type domain is found at 161–246 (GDKVVIDFQG…IKKIMEGKLP (86 aa)).

The protein belongs to the FKBP-type PPIase family. Tig subfamily.

It is found in the cytoplasm. The catalysed reaction is [protein]-peptidylproline (omega=180) = [protein]-peptidylproline (omega=0). Functionally, involved in protein export. Acts as a chaperone by maintaining the newly synthesized protein in an open conformation. Functions as a peptidyl-prolyl cis-trans isomerase. This is Trigger factor from Legionella pneumophila subsp. pneumophila (strain Philadelphia 1 / ATCC 33152 / DSM 7513).